The chain runs to 1528 residues: Rho GTPase-activating protein 7 (1528 aa).

Disordered regions lie at residues 72–94 (DFPG…HEGE), 288–310 (MSAE…PPKV), and 372–436 (ALST…TKPK). Residues 81-94 (LSKDVDENDSHEGE) are compositionally biased toward basic and acidic residues. The segment covering 374-384 (STSSSPSGTPT) has biased composition (low complexity). The span at 396 to 436 (GSESGADTISVNQTRVNLSSDTESTDLPSSTPVANSGTKPK) shows a compositional bias: polar residues. Residues 448–515 (KAEIEAKEAC…LNKCAVMKLE (68 aa)) enclose the SAM domain. Phosphoserine occurs at positions 523, 526, and 566. Disordered stretches follow at residues 558–617 (PKQD…ATPR), 732–764 (RSVS…RTRS), 829–876 (PSGN…SSRL), and 928–990 (SDEG…GVGA). Composition is skewed to low complexity over residues 591–605 (VSSV…SLPS) and 734–760 (VSNS…SPVT). The tract at residues 710 to 884 (QLNCVEISAL…RLSIYDNVPG (175 aa)) is focal adhesion-targeting (FAT). Residue Ser757 is modified to Phosphoserine. Over residues 851 to 862 (LRRENSSDSPKE) the composition is skewed to basic and acidic residues. The segment covering 936–948 (ALDSVSPCPSSPK) has biased composition (polar residues). Basic and acidic residues predominate over residues 950-960 (IHLDVDNDRTT). A compositionally biased stretch (polar residues) spans 961-972 (PSDLDSTGNSLN). The tract at residues 1051–1073 (KHGFSWAVPKFMKRIKVPDYKDR) is polybasic cluster (PBR). The Rho-GAP domain occupies 1078-1284 (VPLTVNVQRT…HMIAECKKLF (207 aa)). Positions 1314–1521 (GNDDSADYQH…RDSFSNQNTE (208 aa)) constitute an START domain.

Interacts with EF1A1, facilitates EF1A1 distribution to the membrane periphery and ruffles upon growth factor stimulation and suppresses cell migration. Interacts with tensin TNS1 (via N-terminus); the interaction is decreased by phosphorylation of TNS1. Interacts with TNS3 and PTEN; in resting cells, interacts with TNS3 (via C2 tensin-type domain) but, following growth factor stimulation, TNS3 and PTEN are phosphorylated which leads to weakened interaction with TNS3 and enhanced interaction with PTEN. Interacts (via C-terminus) with tensin TNS4 (via SH2 domain); the interaction is independent of tyrosine phosphorylation of DLC1. In terms of tissue distribution, highest level of expression in the spleen, with rather lower levels in prostate, testis, ovary, small intestine and colon, but none in the thymus.

It localises to the cytoplasm. Its subcellular location is the cell junction. The protein resides in the focal adhesion. It is found in the membrane. In terms of biological role, functions as a GTPase-activating protein for the small GTPases RHOA, RHOB, RHOC and CDC42, terminating their downstream signaling. This induces morphological changes and detachment through cytoskeletal reorganization, playing a critical role in biological processes such as cell migration and proliferation. Also functions in vivo as an activator of the phospholipase PLCD1. Active DLC1 increases cell migration velocity but reduces directionality. Required for growth factor-induced epithelial cell migration; in resting cells, interacts with TNS3 while PTEN interacts with the p85 regulatory subunit of the PI3K kinase complex but growth factor stimulation induces phosphorylation of TNS3 and PTEN, causing them to change their binding preference so that PTEN interacts with DLC1 and TNS3 interacts with p85. The PTEN-DLC1 complex translocates to the posterior of migrating cells to activate RHOA while the TNS3-p85 complex translocates to the leading edge of migrating cells to promote RAC1 activation. The protein is Rho GTPase-activating protein 7 (DLC1) of Homo sapiens (Human).